Here is a 459-residue protein sequence, read N- to C-terminus: Type I restriction enzyme HindI specificity subunit (459 aa).

Belongs to the type-I restriction system S methylase family. In terms of assembly, the type I restriction/modification system is composed of three polypeptides R, M and S; the restriction enzyme has stoichiometry R(2)M(2)S(1) while the methyltransferase is M(2)S(1).

The specificity (S) subunit of a type I restriction enzyme; this subunit dictates DNA sequence specificity. The M and S subunits together form a methyltransferase (MTase) that methylates adenosines in the sequence 5'-RAACN(5)TAG-3'. Methylation protects against cleavage by HindI. In the presence of the R subunit the complex can also act as an endonuclease, binding to the same target sequence but cutting the DNA some distance from this site. Whether the DNA is cut or modified depends on the methylation state of the target sequence. When the target site is unmodified, the DNA is cut. When the target site is hemimethylated, the complex acts as a maintenance MTase modifying the DNA so that both strands become methylated. After locating a non-methylated recognition site, the enzyme complex serves as a molecular motor that translocates DNA in an ATP-dependent manner until a collision occurs that triggers cleavage. In Haemophilus influenzae (strain ATCC 51907 / DSM 11121 / KW20 / Rd), this protein is Type I restriction enzyme HindI specificity subunit.